Consider the following 685-residue polypeptide: Putative lipase ROG1 (685 aa).

Residue Ser269 is the Charge relay system of the active site.

This sequence belongs to the putative lipase ROG1 family.

The sequence is that of Putative lipase ROG1 (ROG1) from Saccharomyces cerevisiae (strain ATCC 204508 / S288c) (Baker's yeast).